The chain runs to 261 residues: 5'-nucleotidase SurE (261 aa).

Aspartate 8, aspartate 9, serine 43, and asparagine 96 together coordinate a divalent metal cation.

This sequence belongs to the SurE nucleotidase family. The cofactor is a divalent metal cation.

Its subcellular location is the cytoplasm. It catalyses the reaction a ribonucleoside 5'-phosphate + H2O = a ribonucleoside + phosphate. Its function is as follows. Nucleotidase that shows phosphatase activity on nucleoside 5'-monophosphates. This chain is 5'-nucleotidase SurE, found in Dinoroseobacter shibae (strain DSM 16493 / NCIMB 14021 / DFL 12).